A 133-amino-acid chain; its full sequence is Large-conductance mechanosensitive channel (133 aa).

2 helical membrane-spanning segments follow: residues 17–37 (AFILKGNVVELAVAVIIGGAF) and 73–93 (IGSFAGSVIDFLIIAFVLYLA).

Belongs to the MscL family. As to quaternary structure, homopentamer.

Its subcellular location is the cell inner membrane. Channel that opens in response to stretch forces in the membrane lipid bilayer. May participate in the regulation of osmotic pressure changes within the cell. The polypeptide is Large-conductance mechanosensitive channel (Synechococcus elongatus (strain ATCC 33912 / PCC 7942 / FACHB-805) (Anacystis nidulans R2)).